The sequence spans 211 residues: uncharacterized protein (211 aa).

Over M1–R33 the chain is Cytoplasmic. A helical membrane pass occupies residues L34–L54. Residues T55 to N58 lie on the Lumenal side of the membrane. A helical transmembrane segment spans residues T59 to M79. The Cytoplasmic segment spans residues E80–N116. The helical transmembrane segment at W117–A137 threads the bilayer. Topologically, residues S138 to L162 are lumenal. Residues G163–F183 traverse the membrane as a helical segment. At K184–L211 the chain is on the cytoplasmic side.

The protein localises to the endoplasmic reticulum membrane. This is an uncharacterized protein from Saccharomyces cerevisiae (strain ATCC 204508 / S288c) (Baker's yeast).